Reading from the N-terminus, the 431-residue chain is tRNA (adenine(37)-N6)-methyltransferase (431 aa).

Positions 30–168 (TEPIGYLESC…YIADYDSPQN (139 aa)) constitute a TsaA-like domain. S-adenosyl-L-methionine contacts are provided by residues 47–49 (PRQ), 90–91 (HK), Arg-117, Leu-127, and 148–151 (IDGT). The tract at residues 196–242 (LSGRGKVQPRQSTKERPKCLEDRTSGENSQKSRDMSEIQHTLPEDRE) is disordered. Basic and acidic residues predominate over residues 207-242 (STKERPKCLEDRTSGENSQKSRDMSEIQHTLPEDRE).

Belongs to the tRNA methyltransferase O family.

The catalysed reaction is N(6)-L-threonylcarbamoyladenosine(37) in tRNA + S-adenosyl-L-methionine = N(6)-methyl,N(6)-L-threonylcarbamoyladenosine(37) in tRNA + S-adenosyl-L-homocysteine + H(+). Functionally, S-adenosyl-L-methionine-dependent methyltransferase responsible for the addition of the methyl group in the formation of N6-methyl-N6-threonylcarbamoyladenosine at position 37 (m(6)t(6)A37) of the tRNA anticodon loop of tRNA(Ser)(GCU). The methyl group of m(6)t(6)A37 may improve the efficiency of the tRNA decoding ability. May bind to tRNA. This chain is tRNA (adenine(37)-N6)-methyltransferase, found in Mus musculus (Mouse).